The following is a 572-amino-acid chain: MLKNPATKYRSFKPVTLTDRQWPSRTITHPPIWMSTDLRDGNQSLFEPMDAQRKMRMFKTLVQIGFKEIEVAFPSASQTDFNFVRELIEGGHIPDDVTIEVLTQARDDLIERTFESLRGVPRAIVHLYNATAPEFRKIVFNLEKSGVKELAQNAARTMKRIAATMPETQFTFQYSPEVFSGTEIEFAKEVCDAVFDVWQPTPEHKAIVNLPATVEMSTPNIYADQIEWMHRNLARRDSLIISVHPHNDRGTAVAAAELAVMAGADRIEGCLFGNGERTGNVDLVTLALNLYTQGVDPGLDFSNINEVARTAEECTQLPIHPRHPYVGDLVFTAFSGSHQDAIKKGFAVQKPDAVWEVPYMPIDPADLGRTYDSVIRVNSQSGKGGIAYLLEQGYGVVLPRRLQVDFSSAVQRFTDDSGQEVTSAQIWELFQQEYVQNTAPIHYVGHSLSEREGRERIKLTVDIHGTRRVLTGEGNGPLDALMHAIGVPVRIQHYEERALTQGADARAVAVAEMAGADVTGSAFGVGIDANLVTASIRAVISGVNRAYARVNAQAQENFFDAAMNDAAESVGV.

The Pyruvate carboxyltransferase domain occupies proline 31–asparagine 305. 4 residues coordinate Mg(2+): aspartate 40, histidine 244, histidine 246, and asparagine 280. A regulatory domain region spans residues asparagine 437–valine 572.

This sequence belongs to the alpha-IPM synthase/homocitrate synthase family. LeuA type 2 subfamily. As to quaternary structure, homodimer. Mg(2+) serves as cofactor.

Its subcellular location is the cytoplasm. The enzyme catalyses 3-methyl-2-oxobutanoate + acetyl-CoA + H2O = (2S)-2-isopropylmalate + CoA + H(+). It functions in the pathway amino-acid biosynthesis; L-leucine biosynthesis; L-leucine from 3-methyl-2-oxobutanoate: step 1/4. In terms of biological role, catalyzes the condensation of the acetyl group of acetyl-CoA with 3-methyl-2-oxobutanoate (2-ketoisovalerate) to form 3-carboxy-3-hydroxy-4-methylpentanoate (2-isopropylmalate). The protein is 2-isopropylmalate synthase of Paraburkholderia phytofirmans (strain DSM 17436 / LMG 22146 / PsJN) (Burkholderia phytofirmans).